Consider the following 348-residue polypeptide: Uroporphyrinogen decarboxylase (348 aa).

Substrate is bound by residues 27–31, Phe-46, Asp-76, Tyr-152, Ser-207, and His-320; that span reads RQAGR.

The protein belongs to the uroporphyrinogen decarboxylase family. As to quaternary structure, homodimer.

The protein resides in the cytoplasm. The enzyme catalyses uroporphyrinogen III + 4 H(+) = coproporphyrinogen III + 4 CO2. Its pathway is porphyrin-containing compound metabolism; protoporphyrin-IX biosynthesis; coproporphyrinogen-III from 5-aminolevulinate: step 4/4. Catalyzes the decarboxylation of four acetate groups of uroporphyrinogen-III to yield coproporphyrinogen-III. This is Uroporphyrinogen decarboxylase from Bacillus cytotoxicus (strain DSM 22905 / CIP 110041 / 391-98 / NVH 391-98).